We begin with the raw amino-acid sequence, 111 residues long: Probable 4-amino-4-deoxy-L-arabinose-phosphoundecaprenol flippase subunit ArnE (111 aa).

3 helical membrane-spanning segments follow: residues 36–56, 61–81, and 88–108; these read IVLW…LWLL, VPVG…TLAA, and PVSP…VILG. Positions 40 to 109 constitute an EamA domain; sequence LGLALACLGL…IIGGIVILGS (70 aa).

It belongs to the ArnE family. As to quaternary structure, heterodimer of ArnE and ArnF.

The protein resides in the cell inner membrane. It participates in bacterial outer membrane biogenesis; lipopolysaccharide biosynthesis. In terms of biological role, translocates 4-amino-4-deoxy-L-arabinose-phosphoundecaprenol (alpha-L-Ara4N-phosphoundecaprenol) from the cytoplasmic to the periplasmic side of the inner membrane. The chain is Probable 4-amino-4-deoxy-L-arabinose-phosphoundecaprenol flippase subunit ArnE from Shigella flexneri.